The sequence spans 140 residues: Large ribosomal subunit protein uL16 (140 aa).

It belongs to the universal ribosomal protein uL16 family. In terms of assembly, part of the 50S ribosomal subunit.

Its function is as follows. Binds 23S rRNA and is also seen to make contacts with the A and possibly P site tRNAs. This is Large ribosomal subunit protein uL16 from Malacoplasma penetrans (strain HF-2) (Mycoplasma penetrans).